The following is a 1159-amino-acid chain: MEFNTYIGRAGTGKSTAMLNQIKNKMKQDPLGDPIVLIAPTQSTFQLEQAFVNDSELHGSLRTEVLHFERLSHRVFQEVGGLTEQRLSKAALEMMIFHIVQQHESDLKLYGSQAQYYGLSEKLAEQIQDFKKYNVTPEHLNQLIENHSIQTRTKHKLEDISLIYKQLESRMNGEFITTEDSLQQFIEILSQSQWIKKAEVFIDGFHNFSTLEYRIIEALVQHAKQVTVLLTTDGSHHPFSLFRKPSEVLSHLEDIANRLNINLNKTYFNTFYRYNNDDLKNLENGFDALQFTPKHHQNHVKIFESSSMREEINEVARRILKDVREADYKFRDIAILYRDESYAYLFESILPSYDIPFNIDTKKSMTHHPIMEMLRSLLEVIRSNWHINAMLRLFKTNVLTSQFKRSSYLIDLLENFVLERGIYGKRWLDEDIFSIDQFSRMGRKSHQLTEGHQALYKEVIKLKKNVINKVLYFEQAMNEAHTVKDYATSFYESLEYFELPSQLMTQRDELELAGLTEKAEEIDQVWNGLIQILDDLVTVFDDQEMTLQQFLDVFDIGLEQLEFVMIPQTLDQVSIGTMDLAKVDNKKHIYMVGMNDGILPQTVSSSSLITDEEKKYVEDNAHVELSPTSDILQMDEAFVCYIAMTRSQQSVTFSYSLMGNSGDEKEISPFLTQIKELFYDLEITNLQDLHKAQPLLMMQHSHQTKIQLFEYLRGWLDHEDIDYRWLDAYLAIRDDDQLNQGLDYLTTSLTYDNETVQLNEILSQQLYGKTINASVSRFEGYQQCPFKHYASHGLRLNERTKYELQNFDLGDIFHSVLKYISDRIYGDFKNLDTKNIQSLTKEALELILPKVQFNLLNSSAYYKYLSKKIGSIVETTLKALKYQGEYSKFVPQRFETGFRKSPKNKGELVAQPLITNQGIPINIRGQIDRIDTYTKGDHSYVNIIDYKSSESSATLDLTKVYYGLQMQMMTYMDIVLQNKERLGLTDIVKPGGLLYFHVHEPRIKFKSWADIDEDQFQKDYIKNFKMSGLLNRDQEVLDALDIRLEPKYNSDIVPIALTAKGAINQRSSKVADENIIYQLIEHNKKNFIETASHIMDGHTEVAPLKYKQVLPCQFCNYKSVCHVDGLIDSKRYRTVDESIKPLDLIQQLRNEGGERHDSN.

In terms of domain architecture, UvrD-like helicase ATP-binding spans 1 to 275 (MEFNTYIGRA…TYFNTFYRYN (275 aa)). Residue 8 to 15 (GRAGTGKS) participates in ATP binding. The UvrD-like helicase C-terminal domain maps to 269–583 (NTFYRYNNDD…SIGTMDLAKV (315 aa)). [4Fe-4S] cluster contacts are provided by Cys-784, Cys-1112, Cys-1115, and Cys-1121.

This sequence belongs to the helicase family. AddB/RexB type 1 subfamily. As to quaternary structure, heterodimer of AddA and AddB. The cofactor is Mg(2+). It depends on [4Fe-4S] cluster as a cofactor.

In terms of biological role, the heterodimer acts as both an ATP-dependent DNA helicase and an ATP-dependent, dual-direction single-stranded exonuclease. Recognizes the chi site generating a DNA molecule suitable for the initiation of homologous recombination. The AddB subunit has 5' -&gt; 3' nuclease activity but not helicase activity. The protein is ATP-dependent helicase/deoxyribonuclease subunit B of Staphylococcus epidermidis (strain ATCC 35984 / DSM 28319 / BCRC 17069 / CCUG 31568 / BM 3577 / RP62A).